The chain runs to 274 residues: MGEFPTLLQQGNGWFFIPSAILLGILHGLEPGHSKTMMAAFIIAIKGTVKQAVMLGLAATLSHTAIVWLIALGGMYLSRAFTAQSVEPWLQLISAIIILSTACWMFWRTWRGEQQWLAGNHHHDHDHDHDHDHDHHGHIHPEGATSKAYQDAHERAHAADIQRRFDGQTVTNGQILLFGLTGGLIPCPAAITVLLICIQLKAFTLGATMVLSFSLSLALTLVTVGVGAAISVQQAAKRWSGFSTLARRAPYFSSILIGLVGVYMGIHGYTGIMQ.

Residues 1-12 (MGEFPTLLQQGN) lie on the Periplasmic side of the membrane. The helical transmembrane segment at 13-33 (GWFFIPSAILLGILHGLEPGH) threads the bilayer. Topologically, residues 34-51 (SKTMMAAFIIAIKGTVKQ) are cytoplasmic. The helical transmembrane segment at 52–72 (AVMLGLAATLSHTAIVWLIAL) threads the bilayer. The Periplasmic portion of the chain corresponds to 73–85 (GGMYLSRAFTAQS). A helical transmembrane segment spans residues 86-106 (VEPWLQLISAIIILSTACWMF). Over 107-174 (WRTWRGEQQW…FDGQTVTNGQ (68 aa)) the chain is Cytoplasmic. Residues 122–141 (HHDHDHDHDHDHDHHGHIHP) are compositionally biased toward basic and acidic residues. A disordered region spans residues 122–143 (HHDHDHDHDHDHDHHGHIHPEG). The chain crosses the membrane as a helical span at residues 175–195 (ILLFGLTGGLIPCPAAITVLL). At 196 to 209 (ICIQLKAFTLGATM) the chain is on the periplasmic side. A helical membrane pass occupies residues 210-230 (VLSFSLSLALTLVTVGVGAAI). Residues 231 to 251 (SVQQAAKRWSGFSTLARRAPY) lie on the Cytoplasmic side of the membrane. The chain crosses the membrane as a helical span at residues 252-272 (FSSILIGLVGVYMGIHGYTGI). The Periplasmic portion of the chain corresponds to 273-274 (MQ).

It belongs to the NiCoT transporter (TC 2.A.52) family. RcnA subfamily.

The protein resides in the cell inner membrane. Efflux system for nickel and cobalt. The protein is Nickel/cobalt efflux system RcnA (rcnA) of Salmonella paratyphi A (strain ATCC 9150 / SARB42).